The primary structure comprises 567 residues: Oxygen-dependent choline dehydrogenase (567 aa).

D6–E35 lines the FAD pocket. H475 serves as the catalytic Proton acceptor.

Belongs to the GMC oxidoreductase family. FAD is required as a cofactor.

The enzyme catalyses choline + A = betaine aldehyde + AH2. It catalyses the reaction betaine aldehyde + NAD(+) + H2O = glycine betaine + NADH + 2 H(+). It participates in amine and polyamine biosynthesis; betaine biosynthesis via choline pathway; betaine aldehyde from choline (cytochrome c reductase route): step 1/1. In terms of biological role, involved in the biosynthesis of the osmoprotectant glycine betaine. Catalyzes the oxidation of choline to betaine aldehyde and betaine aldehyde to glycine betaine at the same rate. In Pseudomonas fluorescens (strain Pf0-1), this protein is Oxygen-dependent choline dehydrogenase.